Here is a 314-residue protein sequence, read N- to C-terminus: Fibrinogen-like protein 1 (314 aa).

The first 22 residues, 1–22 (MGKIYSFVLVAIALMMGREGWA), serve as a signal peptide directing secretion. Residues 28-62 (CLREQVRLRAQVHQLETRVKQQQTMIAQLLHEKEV) are a coiled coil. In terms of domain architecture, Fibrinogen C-terminal spans 76–308 (LGGKRQYADC…SVVMKIRPSD (233 aa)). 2 disulfide bridges follow: Cys-85–Cys-114 and Cys-250–Cys-263.

In terms of assembly, homodimer. Interacts (via the Fibrinogen C-terminal domain) with LAG3 (via Ig-like domains 1 and 2). As to expression, mainly expressed in liver. Also expressed in brown adipose tissue.

It is found in the secreted. Its function is as follows. Immune suppressive molecule that inhibits antigen-specific T-cell activation by acting as a major ligand of LAG3. Responsible for LAG3 T-cell inhibitory function. Binds LAG3 independently from MHC class II (MHC-II). Secreted by, and promotes growth of, hepatocytes. This is Fibrinogen-like protein 1 (Fgl1) from Mus musculus (Mouse).